We begin with the raw amino-acid sequence, 333 residues long: Adenosine deaminase (333 aa).

Histidine 12 and histidine 14 together coordinate Zn(2+). Substrate is bound by residues histidine 14, aspartate 16, and glycine 170. Residue histidine 197 coordinates Zn(2+). Glutamate 200 serves as the catalytic Proton donor. Residue aspartate 278 coordinates Zn(2+). Residue aspartate 279 participates in substrate binding.

This sequence belongs to the metallo-dependent hydrolases superfamily. Adenosine and AMP deaminases family. Adenosine deaminase subfamily. Zn(2+) is required as a cofactor.

It carries out the reaction adenosine + H2O + H(+) = inosine + NH4(+). The catalysed reaction is 2'-deoxyadenosine + H2O + H(+) = 2'-deoxyinosine + NH4(+). Functionally, catalyzes the hydrolytic deamination of adenosine and 2-deoxyadenosine. This chain is Adenosine deaminase, found in Salmonella typhi.